The following is a 307-amino-acid chain: Agmatinase (307 aa).

Mn(2+) is bound by residues histidine 128, aspartate 151, histidine 153, aspartate 155, aspartate 232, and aspartate 234.

Belongs to the arginase family. Agmatinase subfamily. Requires Mn(2+) as cofactor.

It catalyses the reaction agmatine + H2O = urea + putrescine. It functions in the pathway amine and polyamine biosynthesis; putrescine biosynthesis via agmatine pathway; putrescine from agmatine: step 1/1. In terms of biological role, catalyzes the formation of putrescine from agmatine. This is Agmatinase from Neisseria meningitidis serogroup A / serotype 4A (strain DSM 15465 / Z2491).